Here is a 274-residue protein sequence, read N- to C-terminus: Probable glycerophosphodiester phosphodiesterase 1 (274 aa).

In terms of domain architecture, GP-PDE spans 12–264 (PFVVAHRGAS…HHPGRTKAWL (253 aa)). His-17 serves as the catalytic Proton acceptor. Positions 44 and 46 each coordinate Ca(2+). The active-site Proton donor is His-59. Ca(2+) is bound at residue Glu-126.

Belongs to the glycerophosphoryl diester phosphodiesterase family. Ca(2+) serves as cofactor.

The catalysed reaction is a sn-glycero-3-phosphodiester + H2O = an alcohol + sn-glycerol 3-phosphate + H(+). Functionally, glycerophosphodiester phosphodiesterase hydrolyzes glycerophosphodiesters into glycerol-3-phosphate (G3P) and the corresponding alcohol. The protein is Probable glycerophosphodiester phosphodiesterase 1 (glpQ1) of Mycobacterium tuberculosis (strain CDC 1551 / Oshkosh).